The primary structure comprises 478 residues: Multidrug resistance outer membrane protein MdtQ (478 aa).

An N-terminal signal peptide occupies residues M1–G21. C22 is lipidated: N-palmitoyl cysteine. C22 is lipidated: S-diacylglycerol cysteine.

This sequence belongs to the outer membrane factor (OMF) (TC 1.B.17) family.

It is found in the cell outer membrane. Could be involved in resistance to puromycin, acriflavine and tetraphenylarsonium chloride. In Escherichia coli O157:H7, this protein is Multidrug resistance outer membrane protein MdtQ (mdtQ).